Here is a 299-residue protein sequence, read N- to C-terminus: Coenzyme PQQ synthesis protein B (299 aa).

Belongs to the PqqB family.

It functions in the pathway cofactor biosynthesis; pyrroloquinoline quinone biosynthesis. May be involved in the transport of PQQ or its precursor to the periplasm. This is Coenzyme PQQ synthesis protein B from Methylorubrum extorquens (strain CM4 / NCIMB 13688) (Methylobacterium extorquens).